A 516-amino-acid chain; its full sequence is Acetylcholine receptor subunit delta (516 aa).

A signal peptide spans 1–21 (MEGSVLTLVLLAALVVCGSWG). Residues 22-244 (LNEEERLIRH…VTFYLIIRRK (223 aa)) are Extracellular-facing. Asn96 and Asn163 each carry an N-linked (GlcNAc...) asparagine glycan. A disulfide bridge links Cys150 with Cys164. 3 consecutive transmembrane segments (helical) span residues 245–269 (PLFY…VFYL), 279–296 (MAIS…LISK), and 311–332 (FLLF…VLNI). The Cytoplasmic portion of the chain corresponds to 333-470 (HFRTPSTHVL…WNRVARTVDR (138 aa)). Tyr389 is modified (phosphotyrosine; by Tyr-kinases). A helical transmembrane segment spans residues 471–493 (LCLFVVTPIMVVGTAWIFLQGAY).

This sequence belongs to the ligand-gated ion channel (TC 1.A.9) family. Acetylcholine receptor (TC 1.A.9.1) subfamily. Delta/CHRND sub-subfamily. As to quaternary structure, pentamer of two alpha chains, and one each of the beta, delta, and gamma (in immature muscle) or epsilon (in mature muscle) chains. The muscle heteropentamer composed of alpha-1, beta-1, delta, epsilon subunits interacts with the alpha-conotoxin ImII.

It is found in the postsynaptic cell membrane. The protein localises to the cell membrane. The enzyme catalyses K(+)(in) = K(+)(out). The catalysed reaction is Na(+)(in) = Na(+)(out). After binding acetylcholine, the AChR responds by an extensive change in conformation that affects all subunits and leads to opening of an ion-conducting channel across the plasma membrane. The polypeptide is Acetylcholine receptor subunit delta (CHRND) (Bos taurus (Bovine)).